The sequence spans 647 residues: Putative ferric-chelate reductase 1 homolog (647 aa).

A helical transmembrane segment spans residues tryptophan 10–serine 30. The 171-residue stretch at proline 25 to proline 195 folds into the Reelin domain. N-linked (GlcNAc...) asparagine glycans are attached at residues asparagine 127 and asparagine 158. Residues threonine 245–glycine 368 form the DOMON domain. A Cytochrome b561 domain is found at lysine 372–alanine 570. A helical transmembrane segment spans residues leucine 408–alanine 428. Heme b is bound by residues histidine 409 and histidine 450. Helical transmembrane passes span leucine 452–leucine 472, histidine 480–phenylalanine 500, glycine 515–valine 535, tryptophan 548–glycine 568, and leucine 616–valine 636. Positions 480 and 516 each coordinate heme b.

This sequence belongs to the FRRS1 family. It depends on heme b as a cofactor.

Its subcellular location is the membrane. Its function is as follows. Putative ferric-chelate reductases reduce Fe(3+) to Fe(2+) before its transport from the endosome to the cytoplasm. The sequence is that of Putative ferric-chelate reductase 1 homolog from Drosophila melanogaster (Fruit fly).